The chain runs to 344 residues: Rho guanine nucleotide exchange factor 39 (344 aa).

Positions 22-197 (KRVCTARELL…SETAQKVHAI (176 aa)) constitute a DH domain. The PH domain occupies 227-331 (WFLRQGWLLV…WHHSLTLAIR (105 aa)).

It localises to the cell membrane. Functionally, promotes cell proliferation. The sequence is that of Rho guanine nucleotide exchange factor 39 (Arhgef39) from Mus musculus (Mouse).